A 358-amino-acid polypeptide reads, in one-letter code: Alanine racemase (358 aa).

The Proton acceptor; specific for D-alanine role is filled by lysine 35. An N6-(pyridoxal phosphate)lysine modification is found at lysine 35. Residue arginine 130 participates in substrate binding. Residue tyrosine 255 is the Proton acceptor; specific for L-alanine of the active site. Methionine 303 contributes to the substrate binding site.

The protein belongs to the alanine racemase family. The cofactor is pyridoxal 5'-phosphate.

The enzyme catalyses L-alanine = D-alanine. It participates in amino-acid biosynthesis; D-alanine biosynthesis; D-alanine from L-alanine: step 1/1. In terms of biological role, catalyzes the interconversion of L-alanine and D-alanine. May also act on other amino acids. In Shewanella putrefaciens (strain CN-32 / ATCC BAA-453), this protein is Alanine racemase (alr).